Consider the following 470-residue polypeptide: GTPase grn1 (470 aa).

A compositionally biased stretch (basic residues) spans M1–R16. Residues M1–Y56 are disordered. Positions S17–K27 are enriched in basic and acidic residues. The CP-type G domain occupies D153 to P333. Residues N202–D205, G276–S283, and D326–G329 each bind GTP. Residues A405–G415 form an RNA-binding region.

This sequence belongs to the TRAFAC class YlqF/YawG GTPase family.

It localises to the nucleus. The protein resides in the nucleolus. In terms of biological role, required for optimal growth. Required for normal processing of ribosomal pre-rRNA. Required for nuclear export of ribosomal protein rpl2501. This is GTPase grn1 from Schizosaccharomyces pombe (strain 972 / ATCC 24843) (Fission yeast).